The primary structure comprises 220 residues: MTAALQALLDPTALSLGLPTPAINKEEYLAICLAALACTRAGKALVGVGGQQQVQACNKWLCPAPAAPEELRFRCTVCGKAFASYQALGGHKSSHRKPPSPGDHYGAAAAAQQLASAGDSKEDSASSAAGSTGPHRCTICRRSFATGQALGGHKRCHYWDGTSVSVSVSASASAASSAVRNFDLNLMPLPESTAAAGIKRWAEEEEVQSPLPVKKLRMSN.

The segment at 73 to 95 adopts a C2H2-type 1 zinc-finger fold; sequence FRCTVCGKAFASYQALGGHKSSH. The disordered stretch occupies residues 90–134; that stretch reads GHKSSHRKPPSPGDHYGAAAAAQQLASAGDSKEDSASSAAGSTGP. The span at 107–117 shows a compositional bias: low complexity; the sequence is AAAAAQQLASA. The C2H2-type 2 zinc finger occupies 135 to 157; that stretch reads HRCTICRRSFATGQALGGHKRCH.

Functionally, probable transcription factor involved in abscisic acid (ABA) signaling. Required for the regulation of the cross-talk between NADPH oxidase, hydrogen peroxide and MAP kinase in ABA signaling. Regulates the expression of the NADPH oxidase genes RBOHB and RBOHE, and the MAPK genes MPK1, MPK4, MPK5, MPK7 and MPK14. Regulates ABA-induced hydrogen peroxide production and antioxidant defense. Required for tolerance to water stress and oxidative stress. The polypeptide is Zinc finger protein 36 (Oryza sativa subsp. japonica (Rice)).